The sequence spans 136 residues: ATP synthase epsilon chain (136 aa).

This sequence belongs to the ATPase epsilon chain family. As to quaternary structure, F-type ATPases have 2 components, CF(1) - the catalytic core - and CF(0) - the membrane proton channel. CF(1) has five subunits: alpha(3), beta(3), gamma(1), delta(1), epsilon(1). CF(0) has three main subunits: a, b and c.

The protein localises to the cell membrane. Produces ATP from ADP in the presence of a proton gradient across the membrane. The chain is ATP synthase epsilon chain from Ureaplasma urealyticum serovar 10 (strain ATCC 33699 / Western).